Reading from the N-terminus, the 715-residue chain is Methylcrotonoyl-CoA carboxylase subunit alpha, mitochondrial (715 aa).

Residues 1-38 constitute a mitochondrion transit peptide; it reads MAAAALLAAVDRNQLRRVPILLLQPREWPWKHRTVKYG. One can recognise a Biotin carboxylation domain in the interval 45-490; it reads ITKVLIANRG…HTDFIPQHHK (446 aa). Lysine 159 provides a ligand contact to ATP. Residues 163 to 360 enclose the ATP-grasp domain; sequence KSIMAAAGVP…LVEWQLRIAA (198 aa). Residue lysine 193 is modified to N6-acetyllysine. Residues lysine 201 and 207–208 each bind ATP; that span reads GG. The residue at position 233 (lysine 233) is an N6-acetyllysine. Residues histidine 251, histidine 278, and glutamate 318 each coordinate ATP. Arginine 335 is an active-site residue. Residue lysine 490 is modified to N6-acetyllysine. Lysine 577 bears the N6-acetyllysine; alternate mark. Lysine 577 carries the post-translational modification N6-succinyllysine; alternate. Residues 622–711 enclose the Biotinyl-binding domain; the sequence is SIEVGIPVPK…NRHAPLVEFE (90 aa). An N6-biotinyllysine modification is found at lysine 677.

As to quaternary structure, probably a dodecamer composed of six biotin-containing alpha subunits (MCCC1) and six beta (MCCC2) subunits. Interacts (via the biotin carboxylation domain) with SIRT4. Biotin serves as cofactor. In terms of processing, acetylated.

It is found in the mitochondrion matrix. The enzyme catalyses 3-methylbut-2-enoyl-CoA + hydrogencarbonate + ATP = 3-methyl-(2E)-glutaconyl-CoA + ADP + phosphate + H(+). The protein operates within amino-acid degradation; L-leucine degradation; (S)-3-hydroxy-3-methylglutaryl-CoA from 3-isovaleryl-CoA: step 2/3. In terms of biological role, biotin-attachment subunit of the 3-methylcrotonyl-CoA carboxylase, an enzyme that catalyzes the conversion of 3-methylcrotonyl-CoA to 3-methylglutaconyl-CoA, a critical step for leucine and isovaleric acid catabolism. The protein is Methylcrotonoyl-CoA carboxylase subunit alpha, mitochondrial of Rattus norvegicus (Rat).